Reading from the N-terminus, the 260-residue chain is Meiotic recombination protein rec6 (260 aa).

The disordered stretch occupies residues 197-222; the sequence is QYSESSLLDDSQLLCSSPPVDSTEEA. Over residues 199–213 the composition is skewed to low complexity; it reads SESSLLDDSQLLCSS.

This sequence belongs to the TOP6B-like family. In terms of assembly, component of the DSB catalytic core (DSBC) complex, composed of at least rec12, rec6 and rec14. The complex interacts with mde2.

Required for formation of the rec12-mediated double-strand breaks (DSBs) that initiate meiotic recombination. May be involved primarily in the early steps of meiotic recombination. The protein is Meiotic recombination protein rec6 of Schizosaccharomyces pombe (strain 972 / ATCC 24843) (Fission yeast).